A 299-amino-acid polypeptide reads, in one-letter code: Transcription elongation factor A protein 2 (299 aa).

Residues 5-82 (EEIARIARRL…KSWKKLLDVS (78 aa)) enclose the TFIIS N-terminal domain. Residue Lys57 forms a Glycyl lysine isopeptide (Lys-Gly) (interchain with G-Cter in ubiquitin) linkage. Ser59 and Ser100 each carry phosphoserine. The tract at residues 82–127 (SDGKSRNQGRGTPLPTSSSKDASRTTDLSCKKPDPPRTPSTPRITT) is disordered. Residues 87–101 (RNQGRGTPLPTSSSK) show a composition bias toward polar residues. Basic and acidic residues predominate over residues 102–116 (DASRTTDLSCKKPDP). The TFIIS central domain maps to 138-254 (VRNKCREMLT…EHQMARTGGT (117 aa)). The TFIIS-type zinc-finger motif lies at 257–297 (DLFTCNKCRKKNCTYTQVQTRSSDEPMTTYVVCNECGNRWK). Residues Cys261, Cys264, Cys289, and Cys292 each coordinate Zn(2+).

Belongs to the TFS-II family. In terms of assembly, interacts with the basal transcription factor GTF2B. Interacts with REXO1. Testis and ovary specific. Specific to testicular germ cells.

The protein resides in the nucleus. In terms of biological role, necessary for efficient RNA polymerase II transcription elongation past template-encoded arresting sites. The arresting sites in DNA have the property of trapping a certain fraction of elongating RNA polymerases that pass through, resulting in locked ternary complexes. Cleavage of the nascent transcript by S-II allows the resumption of elongation from the new 3'-terminus. This is Transcription elongation factor A protein 2 (Tcea2) from Mus musculus (Mouse).